A 468-amino-acid chain; its full sequence is UDP-N-acetylmuramate--L-alanine ligase (468 aa).

An ATP-binding site is contributed by 112–118 (GTHGKTT).

The protein belongs to the MurCDEF family.

It is found in the cytoplasm. It catalyses the reaction UDP-N-acetyl-alpha-D-muramate + L-alanine + ATP = UDP-N-acetyl-alpha-D-muramoyl-L-alanine + ADP + phosphate + H(+). Its pathway is cell wall biogenesis; peptidoglycan biosynthesis. Its function is as follows. Cell wall formation. This Bordetella avium (strain 197N) protein is UDP-N-acetylmuramate--L-alanine ligase.